Reading from the N-terminus, the 232-residue chain is Octanoyltransferase (232 aa).

The BPL/LPL catalytic domain maps to 44–219; that stretch reads EHTADEVWVV…QLARQFGLVL (176 aa). Residues 83–90, 150–152, and 163–165 each bind substrate; these read RGGQVTYH, ALG, and GLS. Residue cysteine 181 is the Acyl-thioester intermediate of the active site.

The protein belongs to the LipB family.

The protein localises to the cytoplasm. It catalyses the reaction octanoyl-[ACP] + L-lysyl-[protein] = N(6)-octanoyl-L-lysyl-[protein] + holo-[ACP] + H(+). Its pathway is protein modification; protein lipoylation via endogenous pathway; protein N(6)-(lipoyl)lysine from octanoyl-[acyl-carrier-protein]: step 1/2. In terms of biological role, catalyzes the transfer of endogenously produced octanoic acid from octanoyl-acyl-carrier-protein onto the lipoyl domains of lipoate-dependent enzymes. Lipoyl-ACP can also act as a substrate although octanoyl-ACP is likely to be the physiological substrate. This Xanthomonas euvesicatoria pv. vesicatoria (strain 85-10) (Xanthomonas campestris pv. vesicatoria) protein is Octanoyltransferase.